The primary structure comprises 443 residues: Probable glycine dehydrogenase (decarboxylating) subunit 1 (443 aa).

The protein belongs to the GcvP family. N-terminal subunit subfamily. The glycine cleavage system is composed of four proteins: P, T, L and H. In this organism, the P 'protein' is a heterodimer of two subunits.

It catalyses the reaction N(6)-[(R)-lipoyl]-L-lysyl-[glycine-cleavage complex H protein] + glycine + H(+) = N(6)-[(R)-S(8)-aminomethyldihydrolipoyl]-L-lysyl-[glycine-cleavage complex H protein] + CO2. The glycine cleavage system catalyzes the degradation of glycine. The P protein binds the alpha-amino group of glycine through its pyridoxal phosphate cofactor; CO(2) is released and the remaining methylamine moiety is then transferred to the lipoamide cofactor of the H protein. This Chlorobium limicola (strain DSM 245 / NBRC 103803 / 6330) protein is Probable glycine dehydrogenase (decarboxylating) subunit 1.